Here is a 147-residue protein sequence, read N- to C-terminus: MALKAQNTISGKEGRLFLDGEEMAHIKTFEANVEKNKSEVNIMGRRMTGHKTTGANGTGTATFYKVTSKFVLLMMDYVKKGSDPYFTLQAVLDDQSSGRGTERVTLYDVNFDSAKIASLDVDSEALEEEVPFTFEDFDVPEKLSDTF.

The protein to B.subtilis YqbM.

The protein is Phage-like element PBSX protein XkdM (xkdM) of Bacillus subtilis (strain 168).